Consider the following 282-residue polypeptide: Glucuronoxylan 4-O-methyltransferase 1 (282 aa).

A helical membrane pass occupies residues 13–33; sequence VLLVFLLATLILIFIVRSTLT.

Belongs to the methyltransferase superfamily. As to expression, expressed in rosette leaves, stems, flowers and siliques.

The protein resides in the golgi apparatus membrane. The catalysed reaction is glucuronoxylan D-glucuronate + n S-adenosyl-L-methionine = glucuronoxylan 4-O-methyl-D-glucuronate + n S-adenosyl-L-homocysteine + n H(+). Its function is as follows. Methyltransferase catalyzing 4-O-methylation of glucuronic acid side chains on xylan. The protein is Glucuronoxylan 4-O-methyltransferase 1 (GXM1) of Arabidopsis thaliana (Mouse-ear cress).